Reading from the N-terminus, the 457-residue chain is Probable ATP-dependent RNA helicase DDX47 (457 aa).

Residue alanine 2 is modified to N-acetylalanine. Serine 9 is subject to Phosphoserine. Residues 26-54 (KTFKDLGVTDVLCEACDQLGWTKPTKIQI) carry the Q motif motif. Positions 57 to 228 (IPLALQGRDI…RAALKNPVKC (172 aa)) constitute a Helicase ATP-binding domain. 70-77 (AETGSGKT) is an ATP binding site. Threonine 151 carries the post-translational modification Phosphothreonine. Residues 176-179 (DEAD) carry the DEAD box motif. Residues 239-399 (KLQQYYLFIP…VFPTQDDEVM (161 aa)) enclose the Helicase C-terminal domain. The segment covering 415 to 430 (ELREHGEKKKRSREDV) has biased composition (basic and acidic residues). The interval 415 to 457 (ELREHGEKKKRSREDVGDNDDTEGAIGVRNKVAGGKMKKRKGR) is disordered. Position 426 is a phosphoserine (serine 426).

Belongs to the DEAD box helicase family. DDX47/RRP3 subfamily. In terms of assembly, interacts with AGO1 and AGO2. Interacts with GABARAP. Interacts with NOL8; the interaction is RNA-dependent.

It is found in the nucleus. Its subcellular location is the nucleolus. The catalysed reaction is ATP + H2O = ADP + phosphate + H(+). Functionally, involved in apoptosis. May have a role in rRNA processing and mRNA splicing. Associates with pre-rRNA precursors. The sequence is that of Probable ATP-dependent RNA helicase DDX47 (DDX47) from Bos taurus (Bovine).